The primary structure comprises 33 residues: GFFALIPKIISSPLFKTLLSAVGSALSSSGEQE.

This sequence belongs to the pardaxin family. In aqueous solution exists as a tetramer.

The protein resides in the secreted. The protein localises to the target cell membrane. Functionally, exhibits unusual shark repellent and surfactant properties. Forms voltage-dependent, ion-permeable channels in membranes. At high concentration causes cell membrane lysis. Causes death in killfish oryzias latipes in 30 minutes at a concentration of 25 micrograms/ml. The protein is Pardaxin P-1 of Pardachirus pavoninus (Peacock sole).